Consider the following 2376-residue polypeptide: Reducing polyketide synthase DEP5 (2376 aa).

The 431-residue stretch at 47–477 folds into the Ketosynthase family 3 (KS3) domain; that stretch reads LEPIAVVGMG…GTNAHTIIES (431 aa). Residues Cys-221, His-358, and His-399 each act as for beta-ketoacyl synthase activity in the active site. The interval 593–906 is malonyl-CoA:ACP transacylase (MAT) domain; it reads VFTGQGAQWA…QYLPTLVRGF (314 aa). Ser-685 functions as the For malonyltransferase activity in the catalytic mechanism. Residues 983 to 1121 are N-terminal hotdog fold; sequence HDVLGQLTTG…GSIAIRTSAR (139 aa). The interval 983 to 1158 is dehydratase (DH) domain; it reads HDVLGQLTTG…FNYGPTFQDM (176 aa). The 304-residue stretch at 983–1286 folds into the PKS/mFAS DH domain; the sequence is HDVLGQLTTG…CIAYEAAIPQ (304 aa). Residue His-1015 is the Proton acceptor; for dehydratase activity of the active site. Residues 1131-1286 are C-terminal hotdog fold; the sequence is LPQRASGRLW…CIAYEAAIPQ (156 aa). Asp-1195 acts as the Proton donor; for dehydratase activity in catalysis. The tract at residues 1659-1964 is enoyl reductase (ER) domain; sequence GRIQAGKVVF…DSICDNKIVI (306 aa). The interval 1988–2163 is ketoreductase (KR) domain; the sequence is ATYLLVGCLG…KPACAVVLPM (176 aa). The 80-residue stretch at 2289 to 2368 folds into the Carrier domain; the sequence is DLVRDHFIAK…KFSELVCGAQ (80 aa). At Ser-2327 the chain carries O-(pantetheine 4'-phosphoryl)serine.

It participates in polyketide biosynthesis. Reducing polyketide synthase; part of the gene cluster that mediates the biosynthesis of depudecin, a highly oxidized eleven-carbon linear polyketide that acts as a histone deacetylase (HDAC) inhibitor and makes a small contribution to pathogenesis. The reducing polyketide synthase DEP5 is the central enzyme in depudecin biosynthesis by yielding the backbone polyketide chain. The monooxygenases DEP2 and DEP4, as well as the uncharacterized protein DEP1, then act as tailoring enzymes to modify the intermediate polyketide chain into depudecin. This Alternaria brassicicola (Dark leaf spot agent) protein is Reducing polyketide synthase DEP5.